A 777-amino-acid chain; its full sequence is Degenerin unc-8 (777 aa).

Residues 1-128 (MSPLLTWNLI…VATSSFFGRY (128 aa)) lie on the Cytoplasmic side of the membrane. A helical transmembrane segment spans residues 129–149 (VWAALFMCMLMAFLLQTYWTM). Residues 150–689 (SEYLQYRTII…KETAGYTLVN (540 aa)) lie on the Extracellular side of the membrane. N274, N319, N357, N411, N453, N533, and N597 each carry an N-linked (GlcNAc...) asparagine glycan. The helical transmembrane segment at 690–710 (LFSDFGGNIGLWIGFSVITFA) threads the bilayer. The Cytoplasmic segment spans residues 711–777 (EFAELFCEIC…NESTKELMSK (67 aa)). Residues 752–777 (QRSPKKSQPGEDEVSTNESTKELMSK) are disordered.

This sequence belongs to the amiloride-sensitive sodium channel (TC 1.A.6) family.

The protein resides in the membrane. Sodium permeable non-voltage-sensitive ion channel. Involved in the activity-dependent removal of selected presynaptic proteins, such as synaptobrevin snb-1, and Ras-related rab-3, in the remodeling of GABAergic motor neurons. The protein is Degenerin unc-8 of Caenorhabditis elegans.